Reading from the N-terminus, the 462-residue chain is Sugar transporter ERD6-like 2 (462 aa).

12 helical membrane-spanning segments follow: residues 23–43 (SGLLLSTSVVVAGSFCYGCAM), 70–90 (VMTLGGMITAVFSGKISALVG), 96–116 (WISDVCCIFGWLAVAFAHDII), 123–143 (LFLGFGVGLISYVVPVYIAEI), 156–176 (NQLLQCLGISLMFFTGNFFHW), 178–198 (TLALLSAIPSAFQVICLFFIP), 261–281 (LIIGLGLMLLQQFCGSAAISA), 296–316 (IGTTILAVILIPQSIVVMLTV), 324–344 (LLMISSIGMCICSFFIGLSYY), 357–377 (VMLIVGLVGYVSSFGIGLGGL), 397–417 (LVTMSNWFFNWIIIYSFNFMI), and 423–443 (GTYFIFSGVSLVTIVFIWTLV).

This sequence belongs to the major facilitator superfamily. Sugar transporter (TC 2.A.1.1) family.

It is found in the membrane. Functionally, sugar transporter. The polypeptide is Sugar transporter ERD6-like 2 (SUGTL3) (Arabidopsis thaliana (Mouse-ear cress)).